We begin with the raw amino-acid sequence, 294 residues long: MEQYEKVEKIGEGTYGVVYKARDRATNETIALKKIRLEQEDEGVPSTAIREISLLKEMQHRNIVRLQDVVHSEKRLYLVFEYLDLDLKKFMDSSPEFAKDQRQIKMFLYQILCGIAYCHSHRVLHRDLKPQNLLIDRSSNAVKLADFGLARAFGIPVRTFTHEVVTLWYRAPEILLGSRHYSTPVDVWSVGCIFAEMINQRPLFPGDSEIDELFKIFRITGTPNEETWPGVTSLPDFKSAFPKWPAKDLATQVPNLEPAGLDLLSSTCRLDPTRRITARGALEHEYFKDIKFVP.

A Protein kinase domain is found at 4 to 287 (YEKVEKIGEG…ARGALEHEYF (284 aa)). ATP-binding positions include 10–18 (IGEGTYGVV) and K33. T14 is subject to Phosphothreonine. A Phosphotyrosine modification is found at Y15. D127 (proton acceptor) is an active-site residue. The residue at position 161 (T161) is a Phosphothreonine; by CAK.

The protein belongs to the protein kinase superfamily. CMGC Ser/Thr protein kinase family. CDC2/CDKX subfamily. Found in most organs including root, young leaf, stem, vegetative meristem and flower bud.

It catalyses the reaction L-seryl-[protein] + ATP = O-phospho-L-seryl-[protein] + ADP + H(+). The catalysed reaction is L-threonyl-[protein] + ATP = O-phospho-L-threonyl-[protein] + ADP + H(+). With respect to regulation, phosphorylation at Thr-14 or Tyr-15 inactivates the enzyme, while phosphorylation at Thr-161 activates it. Functionally, plays a key role in the control of the eukaryotic cell cycle. Component of the kinase complex that phosphorylates the repetitive C-terminus of RNA polymerase II. This Medicago sativa (Alfalfa) protein is Cell division control protein 2 homolog 2 (CDC2B).